The primary structure comprises 333 residues: Transcription initiation factor IIB (333 aa).

The segment at 33-64 adopts a TFIIB-type zinc-finger fold; it reads EVYRCPICGNDKFIYNYERGEVVCIVCGAVVQ. Zn(2+) contacts are provided by cysteine 37, cysteine 40, cysteine 56, and cysteine 59. A run of 2 repeats spans residues 149 to 232 and 243 to 324.

This sequence belongs to the TFIIB family.

In terms of biological role, stabilizes TBP binding to an archaeal box-A promoter. Also responsible for recruiting RNA polymerase II to the pre-initiation complex (DNA-TBP-TFIIB). The chain is Transcription initiation factor IIB from Pyrobaculum neutrophilum (strain DSM 2338 / JCM 9278 / NBRC 100436 / V24Sta) (Thermoproteus neutrophilus).